The chain runs to 197 residues: NADH-quinone oxidoreductase subunit I 2 (197 aa).

4Fe-4S ferredoxin-type domains follow at residues 42–71 and 91–120; these read GVIGLFEENCTVCMLCARECPDWCIYIDSH and DRFAIDFALCMYCGICIEVCPFDALFWSPE. 8 residues coordinate [4Fe-4S] cluster: C51, C54, C57, C61, C100, C103, C106, and C110. A disordered region spans residues 147-197; that stretch reads APPALDPGAEEPKELAAARKAADKLAAQQQPDQPGPDHPGQPDESGQEGRT. A compositionally biased stretch (basic and acidic residues) spans 156–169; the sequence is EEPKELAAARKAAD.

Belongs to the complex I 23 kDa subunit family. As to quaternary structure, NDH-1 is composed of 14 different subunits. Subunits NuoA, H, J, K, L, M, N constitute the membrane sector of the complex. It depends on [4Fe-4S] cluster as a cofactor.

It is found in the cell membrane. The catalysed reaction is a quinone + NADH + 5 H(+)(in) = a quinol + NAD(+) + 4 H(+)(out). Functionally, NDH-1 shuttles electrons from NADH, via FMN and iron-sulfur (Fe-S) centers, to quinones in the respiratory chain. The immediate electron acceptor for the enzyme in this species is believed to be ubiquinone. Couples the redox reaction to proton translocation (for every two electrons transferred, four hydrogen ions are translocated across the cytoplasmic membrane), and thus conserves the redox energy in a proton gradient. The protein is NADH-quinone oxidoreductase subunit I 2 of Streptomyces coelicolor (strain ATCC BAA-471 / A3(2) / M145).